The primary structure comprises 424 residues: MQLRLPHLQRSKSMAKPLPVSPLARPLPDLATIAGVRLSAVAAGIRYQGRTDLMLAEFVPGTVAAGVYTKNACPGAPVLWCREALTTPYARALLVNAGNANVFTGRAGIQACEDCADATAQLLDCPPQDVFLASTGVIGEKLPQDRIIAALPAARAGLEENGWADAARAIMTTDTFPKAARRDVKINGTPVRIQGIAKGSGMVAPDMATMLAYVATDAKLPQNVLQSLLASGCAQSFNSITVDSDTSTSDMLMIFATGLADNPEVDDVNDPALAEFTLALNDLLLELALMVVRDGEGATKLVRIAVTGADSNLSAHRIALCIANSPLVKTAIAGEDANWGRVVMAVGKSGEPADRDRLSVAIGGTWIAKDGGVVENYDEAPVVAHMKGQEIEIAVDLDLGDGQARVWTCDLTHGYIDINGSYRS.

Substrate-binding residues include Thr-172, Lys-198, Thr-209, Glu-296, Asn-419, and Ser-424. The active-site Nucleophile is Thr-209.

Belongs to the ArgJ family. In terms of assembly, heterotetramer of two alpha and two beta chains.

It localises to the cytoplasm. The catalysed reaction is N(2)-acetyl-L-ornithine + L-glutamate = N-acetyl-L-glutamate + L-ornithine. It carries out the reaction L-glutamate + acetyl-CoA = N-acetyl-L-glutamate + CoA + H(+). Its pathway is amino-acid biosynthesis; L-arginine biosynthesis; L-ornithine and N-acetyl-L-glutamate from L-glutamate and N(2)-acetyl-L-ornithine (cyclic): step 1/1. It participates in amino-acid biosynthesis; L-arginine biosynthesis; N(2)-acetyl-L-ornithine from L-glutamate: step 1/4. Functionally, catalyzes two activities which are involved in the cyclic version of arginine biosynthesis: the synthesis of N-acetylglutamate from glutamate and acetyl-CoA as the acetyl donor, and of ornithine by transacetylation between N(2)-acetylornithine and glutamate. The polypeptide is Arginine biosynthesis bifunctional protein ArgJ (Gluconobacter oxydans (strain 621H) (Gluconobacter suboxydans)).